Here is a 207-residue protein sequence, read N- to C-terminus: MPKINILNQQGDLVSEKVLATTVFDIKPNQQVLYDVVNAQRAAMRQGTHATKTRALVAGGGKKPWRQKGTGRARHGSIRSPLWRGGGVTFGPSPRNYSVKVNQKVRILALKSALSLQVQNNQLVVLDNINLATHKTKDFQQMLQKLNITSKSLIVVTQMTEQLALASRNLSYITLETASHASVYQILNCKQLVLTADAVNYFEEVLK.

The interval 58–78 (AGGGKKPWRQKGTGRARHGSI) is disordered. The span at 63–77 (KPWRQKGTGRARHGS) shows a compositional bias: basic residues.

The protein belongs to the universal ribosomal protein uL4 family. Part of the 50S ribosomal subunit.

Functionally, one of the primary rRNA binding proteins, this protein initially binds near the 5'-end of the 23S rRNA. It is important during the early stages of 50S assembly. It makes multiple contacts with different domains of the 23S rRNA in the assembled 50S subunit and ribosome. Forms part of the polypeptide exit tunnel. The chain is Large ribosomal subunit protein uL4 from Aster yellows witches'-broom phytoplasma (strain AYWB).